The sequence spans 297 residues: Protoheme IX farnesyltransferase (297 aa).

The next 8 membrane-spanning stretches (helical) occupy residues 15-35 (VVALILFTAVVGMFLAVPAPY), 39-59 (GLLVLSASIGISMVAASAAVF), 91-111 (VWGVFLGFIGLGILQLFVNII), 112-132 (TVVLTFISLIGYTIVYTLYLK), 139-159 (IVIGGAAGATPPVLGWTAVSG), 166-186 (ACLLFLIVFIWTPPHFWALAI), 220-240 (LLLVSLLPYLSGMSGLIYLVI), and 265-285 (AWSTFMYSINYLMLLFIALLF).

Belongs to the UbiA prenyltransferase family. Protoheme IX farnesyltransferase subfamily.

The protein localises to the cell inner membrane. It carries out the reaction heme b + (2E,6E)-farnesyl diphosphate + H2O = Fe(II)-heme o + diphosphate. It participates in porphyrin-containing compound metabolism; heme O biosynthesis; heme O from protoheme: step 1/1. In terms of biological role, converts heme B (protoheme IX) to heme O by substitution of the vinyl group on carbon 2 of heme B porphyrin ring with a hydroxyethyl farnesyl side group. This is Protoheme IX farnesyltransferase from Vesicomyosocius okutanii subsp. Calyptogena okutanii (strain HA).